Reading from the N-terminus, the 222-residue chain is Small ribosomal subunit protein uS3 (222 aa).

The KH type-2 domain occupies 39–107; that stretch reads IRKYIKTKFY…QININIAEIK (69 aa).

It belongs to the universal ribosomal protein uS3 family. In terms of assembly, part of the 30S ribosomal subunit. Forms a tight complex with proteins S10 and S14.

In terms of biological role, binds the lower part of the 30S subunit head. Binds mRNA in the 70S ribosome, positioning it for translation. This is Small ribosomal subunit protein uS3 from Carboxydothermus hydrogenoformans (strain ATCC BAA-161 / DSM 6008 / Z-2901).